The following is a 213-amino-acid chain: ATP phosphoribosyltransferase (213 aa).

This sequence belongs to the ATP phosphoribosyltransferase family. Short subfamily. Heteromultimer composed of HisG and HisZ subunits.

Its subcellular location is the cytoplasm. It carries out the reaction 1-(5-phospho-beta-D-ribosyl)-ATP + diphosphate = 5-phospho-alpha-D-ribose 1-diphosphate + ATP. It participates in amino-acid biosynthesis; L-histidine biosynthesis; L-histidine from 5-phospho-alpha-D-ribose 1-diphosphate: step 1/9. Functionally, catalyzes the condensation of ATP and 5-phosphoribose 1-diphosphate to form N'-(5'-phosphoribosyl)-ATP (PR-ATP). Has a crucial role in the pathway because the rate of histidine biosynthesis seems to be controlled primarily by regulation of HisG enzymatic activity. This Methylococcus capsulatus (strain ATCC 33009 / NCIMB 11132 / Bath) protein is ATP phosphoribosyltransferase.